A 197-amino-acid chain; its full sequence is Imidazoleglycerol-phosphate dehydratase (197 aa).

This sequence belongs to the imidazoleglycerol-phosphate dehydratase family.

It is found in the cytoplasm. The enzyme catalyses D-erythro-1-(imidazol-4-yl)glycerol 3-phosphate = 3-(imidazol-4-yl)-2-oxopropyl phosphate + H2O. It functions in the pathway amino-acid biosynthesis; L-histidine biosynthesis; L-histidine from 5-phospho-alpha-D-ribose 1-diphosphate: step 6/9. This is Imidazoleglycerol-phosphate dehydratase from Halorhodospira halophila (strain DSM 244 / SL1) (Ectothiorhodospira halophila (strain DSM 244 / SL1)).